The sequence spans 140 residues: Truncated tyrosine phosphatase D1 (140 aa).

The region spanning 1-140 (MRRPNCIAEI…SAQWIQFLKK (140 aa)) is the Tyrosine-protein phosphatase domain.

The protein belongs to the protein-tyrosine phosphatase family.

The polypeptide is Truncated tyrosine phosphatase D1 (D1) (Microplitis demolitor bracovirus (isolate Webb) (MdBV)).